Here is a 428-residue protein sequence, read N- to C-terminus: Growth/differentiation factor 2 (428 aa).

The first 22 residues, 1 to 22 (MSPGAFRVALLPLFLLVCVTQQ), serve as a signal peptide directing secretion. Residues 23-318 (KPLQNWEQAS…VGPLLARRKR (296 aa)) constitute a propeptide that is removed on maturation. Residues N70 and N135 are each glycosylated (N-linked (GlcNAc...) asparagine). An intrachain disulfide couples C155 to C236. N262 is a glycosylation site (N-linked (GlcNAc...) asparagine). Intrachain disulfides connect C326/C392, C355/C425, and C359/C427. Positions 401–415 (SILYKDDMGVPTLKY) are interaction with ENG.

The protein belongs to the TGF-beta family. As to quaternary structure, homodimer; disulfide-linked. Detected in extracellular fluid as mature homodimer, and in complex with its propeptide. Interacts with ACVRL1, BMPR2 and ACVR2B with high affinity (in vitro). Identified in a complex with ACVRL1 and ACVR2B. Has ten times lower affinity for ACVR2A (in vitro). Interacts with ENG, forming a heterotetramer with a 2:2 stoichiometry. Can form a heteromeric complex with ENG and ACVRL1. Interacts with type I receptor ACVR1. In terms of processing, a reversible disulfide bond can be formed between the two subunits in the homodimer; this has no effect on GDF2 activity.

The protein localises to the secreted. Functionally, potent circulating inhibitor of angiogenesis. Signals through the type I activin receptor ACVRL1 but not other Alks. Signaling through SMAD1 in endothelial cells requires TGF-beta coreceptor endoglin/ENG. This is Growth/differentiation factor 2 (Gdf2) from Mus musculus (Mouse).